The sequence spans 20 residues: Beta-1,3-glucan-binding protein 2 (20 aa).

The protein belongs to the insect beta-1,3-glucan binding protein family. In terms of assembly, monomer.

It is found in the secreted. Functionally, involved in the recognition of invading microorganisms causing their aggregation. Activates the phenoloxidase cascade. Binds specifically to beta-1,3-glucan. Binds the A.niger cell wall component alpha-1,3-glucan, a fungal pathogen-associated molecular pattern (PAMP) that activates the host immune response. In Galleria mellonella (Greater wax moth), this protein is Beta-1,3-glucan-binding protein 2.